A 650-amino-acid polypeptide reads, in one-letter code: Probable protein phosphatase 2C 36 (650 aa).

The interval 146–166 (SGKKTKEKAKLKKSGSKSFTK) is disordered. Positions 148–166 (KKTKEKAKLKKSGSKSFTK) are enriched in basic residues. One can recognise a PPM-type phosphatase domain in the interval 239–641 (ESALEEPKIQ…DDVSVIVISL (403 aa)). 4 residues coordinate Mn(2+): Asp-276, Gly-277, Asp-569, and Asp-632.

This sequence belongs to the PP2C family. It depends on Mg(2+) as a cofactor. The cofactor is Mn(2+).

It is found in the nucleus. It carries out the reaction O-phospho-L-seryl-[protein] + H2O = L-seryl-[protein] + phosphate. The enzyme catalyses O-phospho-L-threonyl-[protein] + H2O = L-threonyl-[protein] + phosphate. This is Probable protein phosphatase 2C 36 (PLL3) from Arabidopsis thaliana (Mouse-ear cress).